A 676-amino-acid polypeptide reads, in one-letter code: Heat shock cognate HSP70 protein (676 aa).

Residues 613–676 are disordered; it reads SARREGKDGW…RIEAINANTE (64 aa). Acidic residues predominate over residues 630–646; the sequence is GSGDDNDGDDNSDEEDE.

The protein belongs to the heat shock protein 70 family.

The sequence is that of Heat shock cognate HSP70 protein from Trypanosoma brucei brucei.